Consider the following 598-residue polypeptide: MASPTPAPRPDQISASTPLLQSDSTSSCASSIRSLSPSRRRHRNGRTSPAAAASARNLSFASALLSSLCAGSITIFSMYGHIFQERLHYTQFEVNGLSSAASFATYMPVPLLGYMCDRVGPGPLSFVSALFFAAGYGLAAGVYKREADGAALGNGADGEDTGRLAYAAMITAFVFIGVGTCSMYMSAVATCAKNFGRGKHRGLALAVPIAAFGLSGMWQSQLGSRVFYERFADGTKGDLDVFHFFIFLGVLLFVVGCLGTFGLKIVDEEDLIDEAVEELERSGYLDGSTFLQGSWTADRPGYGAIEQSPLDMESAGILDPSKPDNDSDSEEEDDNARIKKTWVLNAETRRFLTDHTMWCFALGFFLMIGPGEAFINNLGTVIKTLYPPHLKFVGEPTSAATHVSIVGITSTLVRLLTGSLTDLLAPSPQARHVQITSSGTLERKRFSLSRVSFLLFFAVTLSVGLATLASGWIQNHGERFWVASGLVGAGYGAVFSLTPIIITVIWGVENFATNWGIVAMFPALGATFWGLVYSAVYQSGVEKAASNGQGGEEDQFCYGSECYASAFWAMAASVWVACGLVLWAWKGKNGWAQRGIVV.

Positions 1–49 are disordered; that stretch reads MASPTPAPRPDQISASTPLLQSDSTSSCASSIRSLSPSRRRHRNGRTSP. The span at 22-37 shows a compositional bias: low complexity; sequence SDSTSSCASSIRSLSP. An N-linked (GlcNAc...) asparagine glycan is attached at asparagine 57. 6 helical membrane-spanning segments follow: residues 63 to 83, 96 to 116, 122 to 142, 164 to 184, 202 to 222, and 241 to 261; these read ALLS…GHIF, GLSS…GYMC, GPLS…AAGV, LAYA…CSMY, GLAL…QSQL, and VFHF…LGTF. The interval 315–334 is disordered; sequence AGILDPSKPDNDSDSEEEDD. Residue asparagine 325 is glycosylated (N-linked (GlcNAc...) asparagine). 6 consecutive transmembrane segments (helical) span residues 355-375, 405-425, 453-473, 486-506, 516-536, and 565-585; these read HTMW…EAFI, IVGI…DLLA, FLLF…SGWI, LVGA…TVIW, GIVA…YSAV, and SAFW…LWAW.

It belongs to the major facilitator superfamily.

It is found in the vacuole membrane. Its function is as follows. Probable transporter. This Neurospora crassa (strain ATCC 24698 / 74-OR23-1A / CBS 708.71 / DSM 1257 / FGSC 987) protein is Probable transporter mch1 (mch1).